The chain runs to 1207 residues: Putative coatomer subunit alpha (1207 aa).

WD repeat units lie at residues 9-50 (SRSS…DRFD), 51-90 (GHDG…LLFS), 93-134 (GHMD…AILT), 135-174 (GHSH…MKNA), 210-249 (GHDR…AWEV), 254-293 (GHFN…AVQT), 296-336 (RDND…HALN), and 370-411 (SAWL…NSLP). A phosphoserine mark is found at Ser-409 and Ser-942.

In terms of assembly, oligomeric complex that consists of at least the alpha, beta, beta', gamma, delta, epsilon and zeta subunits.

Its subcellular location is the cytoplasm. The protein localises to the golgi apparatus membrane. In terms of biological role, the coatomer is a cytosolic protein complex that binds to dilysine motifs and reversibly associates with Golgi non-clathrin-coated vesicles, which further mediate biosynthetic protein transport from the ER, via the Golgi up to the trans Golgi network. Coatomer complex is required for budding from Golgi membranes, and is essential for the retrograde Golgi-to-ER transport of dilysine-tagged proteins. This is Putative coatomer subunit alpha from Schizosaccharomyces pombe (strain 972 / ATCC 24843) (Fission yeast).